A 197-amino-acid chain; its full sequence is Putative RNA polymerase II subunit B1 CTD phosphatase rtr1 (197 aa).

The segment at E60–E139 adopts an RTR1-type zinc-finger fold. Zn(2+)-binding residues include C83, C88, C115, and C119.

Belongs to the RPAP2 family.

Its subcellular location is the cytoplasm. The protein localises to the nucleus. The catalysed reaction is O-phospho-L-seryl-[protein] + H2O = L-seryl-[protein] + phosphate. It catalyses the reaction O-phospho-L-threonyl-[protein] + H2O = L-threonyl-[protein] + phosphate. Putative RNA polymerase II subunit B1 C-terminal domain (CTD) phosphatase involved in RNA polymerase II transcription regulation. In Schizosaccharomyces pombe (strain 972 / ATCC 24843) (Fission yeast), this protein is Putative RNA polymerase II subunit B1 CTD phosphatase rtr1.